The following is a 290-amino-acid chain: MAEAYQIQSNGDPQSKPLLELYVKASGIDARRIGADLFCQEFWMELYALYEIGVARVEVKTVNVNSEAFKKNFLGAQPPIMIEEEKELTYTDNREIEGRIFHLAKEFNVPLFEKDPSAEKRIENLYRNFKLFLRAKVEFDKGKKEPSRVEDLPAQIKVHYNRVCEQLSNIDQLLSERKSRYLLGNSMTEYDCELMPRLHHIRIIGLSLLGFDIPHNFTHLWAYILTAYRTAAFIESCPADQDIIHHYKEQMNLFTNQRETLQSPTKTHTIPEKVLSDIRVKGLAPDVNVH.

Residues 37-57 (LFCQEFWMELYALYEIGVARV) traverse the membrane as a helical segment.

The protein belongs to the chloride channel CLIC family. In terms of assembly, monomer. Expressed in the secretory system, hypodermis, vulva, pharyngeal muscle, rectal gland, tubular rectal epithelium cells, and tubular neuronal support cells in the head and tail.

It is found in the cytoplasm. It localises to the membrane. Its function is as follows. May insert into membranes and form chloride ion channels. Involved in the formation of the excretory canal. Required to prevent cystic lumenal expansions in the excretory cell. Not required for formation of the initial tube, but is required for regulating the size of the tube lumen as it grows. This Caenorhabditis elegans protein is Chloride intracellular channel exc-4 (exc-4).